A 521-amino-acid polypeptide reads, in one-letter code: MTPDSRHRRLLANRYQLVELVGSGAMGQVYRAEDKLLGGVTVAVKFLSQALLNPRMKERFEREATISALLGEKSIHIVRVRDYGLDEKEIPFYVMEYLQGENISDVIKYRPLKVERFLKIARQICFGLDCAHKGIIYQGEACPVVHRDIKPSNVLLVEDPALGELVKILDFGIAKLVQAAEESKTQAFMGTLAYCSPEQMEGKELDSRSDIYSLGVMMYEMLTGEMPLFPDNSSFGGWYEAHHHTKPHPFSARYKIPASLEALVMNCLAKSPKGRPQSVDVIIRAIDAIEAEIKAPPISDTEKTQIAPHLLNTDMEATVVAQRGPGIVPETRLPLVSELCKQLEWPSDKPKQKIVFPYVLNAAEGKLASLWVMLNQEDILTRMSSIRYNQFLLMTSPHPMVLWITVLYHREYGPRWLPCYLDLKTRSGQSFAQMLGESGTYWLLFFALENPTRCQHMLTATVAPNQCKLLKEWAQTSQSMPGGKPQVTKRLLKQELDRLKPKIEAKLSQVKPSFNKEVSGL.

Residues 15–289 (YQLVELVGSG…DVIIRAIDAI (275 aa)) enclose the Protein kinase domain. Residues 21 to 29 (VGSGAMGQV) and K45 contribute to the ATP site. D148 functions as the Proton acceptor in the catalytic mechanism.

It belongs to the protein kinase superfamily. Ser/Thr protein kinase family. Autophosphorylated.

It carries out the reaction L-seryl-[protein] + ATP = O-phospho-L-seryl-[protein] + ADP + H(+). The catalysed reaction is L-threonyl-[protein] + ATP = O-phospho-L-threonyl-[protein] + ADP + H(+). Its function is as follows. Protein kinase that regulates cellular motility via phosphorylation of membrane proteins. In Synechocystis sp. (strain ATCC 27184 / PCC 6803 / Kazusa), this protein is Serine/threonine-protein kinase A (spkA).